Consider the following 804-residue polypeptide: Probable protein phosphatase 2C 18 (804 aa).

Residues 19 to 39 (DASGPVLFWCVLIIFAVPDAI) traverse the membrane as a helical segment. One can recognise a PPM-type phosphatase domain in the interval 129 to 434 (KYIVSSMQGL…ENTTVILVQF (306 aa)). The Mn(2+) site is built by Asp165, Gly166, Gln384, and Glu425. Disordered stretches follow at residues 460-509 (STSA…GGSA), 564-599 (DEVE…LNAS), 623-653 (PLQG…DDDV), and 675-804 (VDST…EGSP). The span at 468 to 499 (GSDSDTSATSDEGVDDTATAGTTTTGYEAGSS) shows a compositional bias: low complexity. Residues 628–637 (DVSSTSTNPN) show a composition bias toward polar residues. Residues 638-647 (TATDTGSGSR) are compositionally biased toward low complexity. A compositionally biased stretch (polar residues) spans 713 to 734 (LVNNDTTVADNNASGVADSTTV). The span at 776-789 (DATATATASASAAV) shows a compositional bias: low complexity. The segment covering 790–804 (ADDEGTAPDDSEGSP) has biased composition (acidic residues).

The protein belongs to the PP2C family. Mg(2+) is required as a cofactor. It depends on Mn(2+) as a cofactor.

It is found in the membrane. It carries out the reaction O-phospho-L-seryl-[protein] + H2O = L-seryl-[protein] + phosphate. The enzyme catalyses O-phospho-L-threonyl-[protein] + H2O = L-threonyl-[protein] + phosphate. This Oryza sativa subsp. japonica (Rice) protein is Probable protein phosphatase 2C 18.